Consider the following 158-residue polypeptide: Transcription factor BTF3 homolog 4 (158 aa).

Residues 33 to 98 enclose the NAC-A/B domain; that stretch reads TADDKKLQSS…AETKQLTEML (66 aa). The interval 125-158 is disordered; it reads LDNKAPKAEDIDEEDDDVPDLVENFDEASKNEAN. Residues 134-150 are compositionally biased toward acidic residues; it reads DIDEEDDDVPDLVENFD.

This sequence belongs to the NAC-beta family.

The polypeptide is Transcription factor BTF3 homolog 4 (btf3l4) (Danio rerio (Zebrafish)).